A 291-amino-acid chain; its full sequence is Bifunctional protein FolD (291 aa).

NADP(+)-binding positions include Gly-167–Ser-169, Ser-192, and Ile-233.

This sequence belongs to the tetrahydrofolate dehydrogenase/cyclohydrolase family. Homodimer.

It carries out the reaction (6R)-5,10-methylene-5,6,7,8-tetrahydrofolate + NADP(+) = (6R)-5,10-methenyltetrahydrofolate + NADPH. The catalysed reaction is (6R)-5,10-methenyltetrahydrofolate + H2O = (6R)-10-formyltetrahydrofolate + H(+). The protein operates within one-carbon metabolism; tetrahydrofolate interconversion. Its function is as follows. Catalyzes the oxidation of 5,10-methylenetetrahydrofolate to 5,10-methenyltetrahydrofolate and then the hydrolysis of 5,10-methenyltetrahydrofolate to 10-formyltetrahydrofolate. This chain is Bifunctional protein FolD, found in Dichelobacter nodosus (strain VCS1703A).